The sequence spans 334 residues: Iron-uptake system permease protein FeuB (334 aa).

9 consecutive transmembrane segments (helical) span residues 9-29, 63-83, 91-111, 119-139, 150-170, 191-211, 243-263, 281-301, and 305-325; these read IILITSPFAIALSLLLSILYG, AAGALLIGAALAVSGALMQGI, PSIMGVSDGSAFIITLCMVLL, MMIYSFIGSALGAVLVFGLAA, LAIIGTVTSMLLSSLSAAMSI, PDFLKLAAPFFLIGIIMAISL, VIILTGSAVALAGKIAFVGLV, PCSCILGGIFLTLCDLASRFI, and FETPIEVVTSIIGVPFFLYLI.

The protein belongs to the binding-protein-dependent transport system permease family. FecCD subfamily. As to quaternary structure, the complex is composed of one ATP-binding protein (YusV), two transmembrane proteins (FeuB and FeuC) and a solute-binding protein (FeuA).

The protein resides in the cell membrane. Its subcellular location is the membrane raft. In terms of biological role, involved in the uptake of iron. Probably responsible for the translocation of the substrate across the membrane. Part of the ABC transporter complex FeuABC/YusV involved in import of the catecholate siderophores bacillibactin and enterobactin. This Bacillus subtilis (strain 168) protein is Iron-uptake system permease protein FeuB (feuB).